Here is a 226-residue protein sequence, read N- to C-terminus: PKHD-type hydroxylase Abu_0724 (226 aa).

The 101-residue stretch at 78 to 178 (HIISPFFNKY…RMVSFMWIQS (101 aa)) folds into the Fe2OG dioxygenase domain. Fe cation is bound by residues His-96, Asp-98, and His-159. Arg-169 is a binding site for 2-oxoglutarate.

Fe(2+) is required as a cofactor. L-ascorbate serves as cofactor.

In Aliarcobacter butzleri (strain RM4018) (Arcobacter butzleri), this protein is PKHD-type hydroxylase Abu_0724.